The following is a 119-amino-acid chain: Large ribosomal subunit protein uL24 (119 aa).

It belongs to the universal ribosomal protein uL24 family. Part of the 50S ribosomal subunit.

Its function is as follows. One of two assembly initiator proteins, it binds directly to the 5'-end of the 23S rRNA, where it nucleates assembly of the 50S subunit. Functionally, located at the polypeptide exit tunnel on the outside of the subunit. The chain is Large ribosomal subunit protein uL24 from Saccharolobus solfataricus (strain ATCC 35092 / DSM 1617 / JCM 11322 / P2) (Sulfolobus solfataricus).